Reading from the N-terminus, the 230-residue chain is Ubiquitin carboxyl-terminal hydrolase isozyme L3 (230 aa).

The UCH catalytic domain maps to 5 to 229 (RWLPLEANPE…LRFNAIALSA (225 aa)). Positions 8-13 (PLEANP) are interaction with ubiquitin. The active-site Nucleophile is the Cys95. Ser130 is subject to Phosphoserine. The segment at 152–159 (AHEGQTEA) is interaction with ubiquitin. Crossover loop which restricts access of large ubiquitin adducts to the active site. His169 serves as the catalytic Proton donor. The interaction with ubiquitin stretch occupies residues 219–224 (ELRFNA).

This sequence belongs to the peptidase C12 family. As to quaternary structure, preferentially binds diubiquitin; the interaction does not hydrolyze diubiquitin but, in vitro, inhibits the hydrolyzing activity on other substrates. Highly expressed in heart, skeletal muscle, and testis.

Its subcellular location is the cytoplasm. It catalyses the reaction Thiol-dependent hydrolysis of ester, thioester, amide, peptide and isopeptide bonds formed by the C-terminal Gly of ubiquitin (a 76-residue protein attached to proteins as an intracellular targeting signal).. With respect to regulation, inhibited by monoubiquitin and diubiquitin. Deubiquitinating enzyme (DUB) that controls levels of cellular ubiquitin through processing of ubiquitin precursors and ubiquitinated proteins. Thiol protease that recognizes and hydrolyzes a peptide bond at the C-terminal glycine of either ubiquitin or NEDD8. Has a 10-fold preference for Arg and Lys at position P3'', and exhibits a preference towards 'Lys-48'-linked ubiquitin chains. Deubiquitinates ENAC in apical compartments, thereby regulating apical membrane recycling. Indirectly increases the phosphorylation of IGFIR, AKT and FOXO1 and promotes insulin-signaling and insulin-induced adipogenesis. Required for stress-response retinal, skeletal muscle and germ cell maintenance. May be involved in working memory. Can hydrolyze UBB(+1), a mutated form of ubiquitin which is not effectively degraded by the proteasome and is associated with neurogenerative disorders. The polypeptide is Ubiquitin carboxyl-terminal hydrolase isozyme L3 (UCHL3) (Homo sapiens (Human)).